We begin with the raw amino-acid sequence, 157 residues long: Transcription antitermination protein NusB (157 aa).

Belongs to the NusB family.

Involved in transcription antitermination. Required for transcription of ribosomal RNA (rRNA) genes. Binds specifically to the boxA antiterminator sequence of the ribosomal RNA (rrn) operons. The protein is Transcription antitermination protein NusB of Xylella fastidiosa (strain Temecula1 / ATCC 700964).